The primary structure comprises 717 residues: ATP-dependent zinc metalloprotease FtsH (717 aa).

The Cytoplasmic portion of the chain corresponds to 1–9 (MKNASRIFK). Residues 10-30 (GPLIWILLCIGLIIVFLQFAG) traverse the membrane as a helical segment. Topologically, residues 31–111 (SGNGYKDIPT…SWQGENPGQS (81 aa)) are extracellular. The chain crosses the membrane as a helical span at residues 112-132 (IWKALLINFLPFVIILLFFLW). Over 133-717 (AMNAAQGMGG…NGNPWGPPRS (585 aa)) the chain is Cytoplasmic. 207–214 (GPPGTGKT) contacts ATP. His-429 contacts Zn(2+). Glu-430 is an active-site residue. 2 residues coordinate Zn(2+): His-433 and Asp-505. Positions 617–717 (AFTGSDKRVP…NGNPWGPPRS (101 aa)) are disordered. Pro residues predominate over residues 691–717 (PEPPSPTHPGEGPQPPSNGNPWGPPRS).

This sequence in the central section; belongs to the AAA ATPase family. In the C-terminal section; belongs to the peptidase M41 family. In terms of assembly, homohexamer. Zn(2+) is required as a cofactor.

The protein resides in the cell membrane. Functionally, acts as a processive, ATP-dependent zinc metallopeptidase for both cytoplasmic and membrane proteins. Plays a role in the quality control of integral membrane proteins. This is ATP-dependent zinc metalloprotease FtsH from Cutibacterium acnes (strain SK137) (Propionibacterium acnes).